The primary structure comprises 62 residues: Large ribosomal subunit protein bL33 (62 aa).

This sequence belongs to the bacterial ribosomal protein bL33 family.

The polypeptide is Large ribosomal subunit protein bL33 (Bacteroides fragilis (strain ATCC 25285 / DSM 2151 / CCUG 4856 / JCM 11019 / LMG 10263 / NCTC 9343 / Onslow / VPI 2553 / EN-2)).